The chain runs to 495 residues: UDP-N-acetylmuramoyl-L-alanyl-D-glutamate--2,6-diaminopimelate ligase (495 aa).

UDP-N-acetyl-alpha-D-muramoyl-L-alanyl-D-glutamate-binding positions include Leu27, Ser29, and 44 to 46; that span reads HQA. 116–122 contributes to the ATP binding site; sequence GTNGKTT. Residues Asn157, 158-159, Ser185, Gln191, and Arg193 contribute to the UDP-N-acetyl-alpha-D-muramoyl-L-alanyl-D-glutamate site; that span reads TT. Lys225 carries the N6-carboxylysine modification. Meso-2,6-diaminopimelate-binding positions include Arg390, 414-417, Gly465, and Glu469; that span reads DNPR. The short motif at 414–417 is the Meso-diaminopimelate recognition motif element; the sequence is DNPR.

This sequence belongs to the MurCDEF family. MurE subfamily. The cofactor is Mg(2+). In terms of processing, carboxylation is probably crucial for Mg(2+) binding and, consequently, for the gamma-phosphate positioning of ATP.

The protein localises to the cytoplasm. It carries out the reaction UDP-N-acetyl-alpha-D-muramoyl-L-alanyl-D-glutamate + meso-2,6-diaminopimelate + ATP = UDP-N-acetyl-alpha-D-muramoyl-L-alanyl-gamma-D-glutamyl-meso-2,6-diaminopimelate + ADP + phosphate + H(+). It functions in the pathway cell wall biogenesis; peptidoglycan biosynthesis. Catalyzes the addition of meso-diaminopimelic acid to the nucleotide precursor UDP-N-acetylmuramoyl-L-alanyl-D-glutamate (UMAG) in the biosynthesis of bacterial cell-wall peptidoglycan. This Escherichia coli O6:H1 (strain CFT073 / ATCC 700928 / UPEC) protein is UDP-N-acetylmuramoyl-L-alanyl-D-glutamate--2,6-diaminopimelate ligase.